A 251-amino-acid polypeptide reads, in one-letter code: Protection of telomeres homolog 2 (251 aa).

The segment at 221–251 is disordered; it reads ELDNWPEGPPKTFAEAIARANNSRRPRDPPQ.

It belongs to the telombin family.

The protein resides in the nucleus. Its subcellular location is the chromosome. The protein localises to the telomere. Telomeric DNA-binding protein, which binds to two or more single-stranded G-rich repeat sequences (G-strand), with high specificity to the 5'-TTAGGC-3' sequence. In addition, repeat sequence binding requires a 3' single-stranded telomeric overhang. Acts redundantly with pot-1 to negatively regulate telomerase-mediated telomere extension. Also regulates telomere length by the telomerase-independent telomere maintenance pathway called ALT (alternative lengthening of telomeres). Does not appear to have a role in anchoring telomeres to the nuclear envelope. The protein is Protection of telomeres homolog 2 of Caenorhabditis elegans.